The sequence spans 420 residues: ATP phosphoribosyltransferase regulatory subunit (420 aa).

The protein belongs to the class-II aminoacyl-tRNA synthetase family. HisZ subfamily. As to quaternary structure, heteromultimer composed of HisG and HisZ subunits.

The protein localises to the cytoplasm. It participates in amino-acid biosynthesis; L-histidine biosynthesis; L-histidine from 5-phospho-alpha-D-ribose 1-diphosphate: step 1/9. In terms of biological role, required for the first step of histidine biosynthesis. May allow the feedback regulation of ATP phosphoribosyltransferase activity by histidine. The sequence is that of ATP phosphoribosyltransferase regulatory subunit from Bacillus cereus (strain AH187).